Consider the following 993-residue polypeptide: SLWGTPRLPCSPGWQGATKRLLVRSVSGASNHQPNSNTGRYRDTVLLPQTSFPMKLLGRQQPDKELEIQQKCGFSELYSWQRERKVKTEFCLHDGPPYANGDPHVGHALNKILKDIANRFHMMSGSKVHFVPGWDCHGLPIEIKVLSELGREAQNLSAMEIREKARSFAKAAIEKQKSAFIRWGIMADWNNCYYTFDGKYEAKQLRTFYQMYDKGLVYRSYKPVFWSPSSRTALAEAELEYNPEHVSRSIYVKFPLLKPSPKLASLIDGSSPVSFLVWTTQPWTIPANEAVCYMPESKYAVVKCSKSGDLYVLAADKVETVASTLETAFETISTFSGVDLENGTCSHPLIPDKASPLLPANHVTMAKGTGLVHTAPAHGMEDYGVASQHNLPMDCLVDEDGVFTDVAGPELQNKAVLEEGTDVVIKMLQTAKNLLKEEKLVHSYPYDWRTKKPVVIRASKQWFINIADIKIAAKELLKKVKFIPGSALNGMVEMMDRRPYWCISRQRVWGVPIPVFHHKTKDEYLINSQTIEHIVKLVEQHGSDVWWTLPPEQLLPKEVLSEVGGPDALEYVPGQDILDIWFDSGTSWSHVLPGPDQRADLYLEGKDQLGGWFQSSLLTSVATRKKAPYKTVIVHGFTLGEKGEKMSKSLGNVIHPDVVVNGGQDQSKEPPYGADVLRWWVADSNVFTEVAIGPSVLNAARDDISKLRNTLRFLLGNVADFNPETDSIPVNDMYVIDQYMLHLLQDLANKITELYKQYDFGKVVRLLRTFYTRELSHFYFSIIKDRLYCEKENDPRRRSCQTALVEILDVIVRSFAPILPHLAEEVFQHIPYIKEPKSVFRTGWISTSSIWKKPGLEEAVESVCAMRDSFLGSIPGKNAAEYKVIIVIEPGLLFEIIEMLQSEETSSTSQLNELMMASESTLLAQEPRELTADVIELKGKFLINLEGGDIREESSYKVIVMPTTKEKCPRCWKYTAESSDTLCPRCAEVVSGK.

A mitochondrion-targeting transit peptide spans 1 to 29 (SLWGTPRLPCSPGWQGATKRLLVRSVSGA). N6-acetyllysine; alternate is present on Lys55. Lys55 is subject to N6-succinyllysine; alternate. The 'HIGH' region signature appears at 97–107 (PYANGDPHVGH). Position 170 is an N6-acetyllysine (Lys170). Lys175 carries the post-translational modification N6-succinyllysine. Lys214 bears the N6-acetyllysine mark. The residue at position 222 (Lys222) is an N6-acetyllysine; alternate. The residue at position 222 (Lys222) is an N6-succinyllysine; alternate. Lys460 and Lys481 each carry N6-succinyllysine. Lys645 and Lys648 together coordinate ATP. A 'KMSKS' region motif is present at residues 645-649 (KMSKS). Lys706 is subject to N6-acetyllysine. Lys756 and Lys762 each carry N6-acetyllysine; alternate. N6-succinyllysine; alternate occurs at positions 756 and 762.

The protein belongs to the class-I aminoacyl-tRNA synthetase family.

It localises to the mitochondrion matrix. The catalysed reaction is tRNA(Ile) + L-isoleucine + ATP = L-isoleucyl-tRNA(Ile) + AMP + diphosphate. Its function is as follows. Aminoacyl-tRNA synthetase that catalyzes the specific attachment of isoleucine to its cognate tRNA (tRNA(Ile)). This chain is Isoleucine--tRNA ligase, mitochondrial (IARS2), found in Macaca fascicularis (Crab-eating macaque).